Consider the following 129-residue polypeptide: MGDEQLAKAGLFVDDFNRLRLIDPDVAELLQSAQDKSSEFNDQLKNFQTTTGGLIDSIEEFANVVETEKIRAMMVRNTQERDLAEDDPVLLQMTIRELTVEKERLRVELEAVRKIEKEQDECIQMMTEH.

The stretch at 89–121 (VLLQMTIRELTVEKERLRVELEAVRKIEKEQDE) forms a coiled coil.

As to quaternary structure, component of the IFT complex B composed of at least che-2, che-13, dyf-1, dyf-3, dyf-6, dyf-11, dyf-13, ift-20, ift-74, ift-81, ifta-2, osm-1, osm-5 and osm-6.

It is found in the cell projection. The protein localises to the cilium. In terms of biological role, component of the intraflagellar transport (IFT) complex B required for transport of proteins in the motile cilium. Required for ciliary entrance and transport of specific ciliary cargo proteins such as che-3 which are related to motility. This Caenorhabditis elegans protein is Intraflagellar transport protein 20 homolog.